We begin with the raw amino-acid sequence, 1255 residues long: MSILSKKLNKLDHTIPIYSPRTTYKNIRQNDEHLLADLTLNFDPFTINVLKNEFGIRDMQMKLSEFILVVKEHLLSWQVDIPNRETKLVRCLTNLFEEIDLNGNGILEWDEFTNYVIEKATVLNNIKTKVDEIKTYTKSQVKPLQAQTKHLTHKFNNLVTKILYIPHIDRLALYEEGSAEILFMNPETGVMNNKTLKVVPKSLFVTSSTVKKDEEGLIHVETKKNFIDLKTMILDILYIPDKKYQVLLTSSNDKYVRGWKHSSNGWVLASQPDNEEELIEHEFKNEIYCLAWDSLNEILYCGQKNGNIVIWYFKTDTEKELEREGAHTEVIMDMITMPKLQFLASGALDGLLILWDTINNKKKRVYKEHTRGITSLSFNEALILLFSAGFDHEVCVWNPYIDNLIYKISGHSSPLLGVKVIEGTSQVITLDSDGNVRVTDIKKFSNVQCFSVETSDEKHKFNPQCFTYIPKPLKLAFCGRSVQLYEYDKNYNPNYVDDYVAICCAFVPSQLAFYTPAGNKIKLWNALTGDIKKIFSDVTQGEITCFTLDSLKKRMLIGDSMGQIGIYNTYNGAMIKALPKHSAEIIQIIHADAITMFISAAMDNKINMTLDNDFGENELIRTLELKDVMITSLGFDPITKMIIVATNTGITSFYESDTGKQNGSFSELTQYEEITSLNLIKNLPYIITTTTNGKINFIALPPLLFKFQKVFYFKNEDSEQKLLEQQKIQKEGEQQLQQQQTQQINIGSAKGSILNNMGQGKRKQDDQVQQNLSISNCIYCDQTKCLFLSDDKGFIKCFDISQILTILEKSYNNHKDKSNNGAKSFLIPPNFDGVEYQEVWSQRAHYEMIKSLEYIQEENLLITTAYDKKVKLWDSKTGNLIDQLQQNYDKQEPRPIAFKRSGTEEIYDTNLEERIDLKRKSSLKNAKLLVKNEQKGSQTAIKSLSLTDKKLNTQESSTQEQEAAQQPQQNKNEGVQGQGDDLFANFNPNKTYDEEFNPFYFMDKIDKTKLKTDRSNSDWKLHINYIKYFESFEDSIKQLNIDIQKQEHELREKTEKQGINNRRFKVNPYQNSDLNAQKFGVDHKPILKDEINFKQENQDQHKVKADNRIQEGLNQVTNSQATLPRIASLQNNKLKLQNQQQQVQNQQTEPSSNRSHQQPGIETKTLAAISGDQNKKQKKVWDNLYKKELQSKFLFGSNQSEIRLSKEEVDAAHRLAAALANYDKDDYRSLKFYNIQIKESKGPKKLQPLSQSKKK.

An EF-hand domain is found at 87-122 (KLVRCLTNLFEEIDLNGNGILEWDEFTNYVIEKATV). Asp100, Asn102, Asn104, and Glu111 together coordinate Ca(2+). WD repeat units follow at residues 228–269 (DLKT…WVLA), 282–322 (EFKN…KELE), 326–365 (AHTEVIMDMITMPKLQFLASGALDGLLILWDTINNKKKRV), 368–407 (EHTRGITSLSFNEALILLFSAGFDHEVCVWNPYIDNLIYK), 410–449 (GHSSPLLGVKVIEGTSQVITLDSDGNVRVTDIKKFSNVQC), 496–536 (VDDY…KIFS), 538–577 (VTQGEITCFTLDSLKKRMLIGDSMGQIGIYNTYNGAMIKA), 580–624 (KHSA…RTLE), 625–664 (LKDVMITSLGFDPITKMIIVATNTGITSFYESDTGKQNGS), 669–708 (TQYEEITSLNLIKNLPYIITTTTNGKINFIALPPLLFKFQ), 769–808 (QQNLSISNCIYCDQTKCLFLSDDKGFIKCFDISQILTILE), and 844–883 (AHYEMIKSLEYIQEENLLITTAYDKKVKLWDSKTGNLIDQ). 2 disordered regions span residues 941–988 (IKSL…NFNP) and 1140–1160 (QQQVQNQQTEPSSNRSHQQPG). Low complexity predominate over residues 953–969 (TQESSTQEQEAAQQPQQ). The segment covering 1148 to 1160 (TEPSSNRSHQQPG) has biased composition (polar residues).

It belongs to the CFAP337 family. Associates with components of the nexin-dynein regulatory complex (N-DRC) and the CFAP184:CFAP263 complex.

It localises to the cell projection. It is found in the cilium. Functionally, associates with components of the nexin-dynein regulatory complex (N-DRC), a key regulator of ciliary/flagellar motility, and might act as an inner dynein arm (IDA) hub or linkage. The protein is Cilia- and flagella-associated protein 337 B of Tetrahymena thermophila (strain SB210).